A 1347-amino-acid polypeptide reads, in one-letter code: Protocadherin-11 X-linked (1347 aa).

The N-terminal stretch at 1-23 (MDLLSGTYIFAVLLACVVFHSGA) is a signal peptide. Residues 24–812 (QEKNYTIREE…VSSPTSDYVK (789 aa)) lie on the Extracellular side of the membrane. 7 consecutive Cadherin domains span residues 26–139 (KNYT…APLF), 140–249 (PATV…HPVF), 250–355 (KETE…VPSI), 362–466 (NPVN…APVF), 467–570 (TQSF…SPVF), 571–673 (THNE…KPVF), and 677–795 (PSNY…APVT). Asn27, Asn48, and Asn54 each carry an N-linked (GlcNAc...) asparagine glycan. N-linked (GlcNAc...) asparagine glycosylation occurs at Asn344. The N-linked (GlcNAc...) asparagine glycan is linked to Asn553. A glycan (N-linked (GlcNAc...) asparagine) is linked at Asn773. A helical membrane pass occupies residues 813–833 (ILVAAVAGTITVVVVIFITAV). At 834-1347 (VRCRQAPHLK…DSPVMEEHPL (514 aa)) the chain is on the cytoplasmic side. Disordered regions lie at residues 1057–1091 (LPEG…GYPQ), 1097–1116 (RATP…ESTF), and 1325–1347 (TFTP…EHPL).

Its subcellular location is the cell membrane. Functionally, potential calcium-dependent cell-adhesion protein. The chain is Protocadherin-11 X-linked (PCDH11X) from Pan troglodytes (Chimpanzee).